A 254-amino-acid polypeptide reads, in one-letter code: UstYa family oxidase phomYc' (254 aa).

A helical membrane pass occupies residues 38 to 58; that stretch reads LVLVLQSVLIISLLASLHILG. A glycan (N-linked (GlcNAc...) asparagine) is linked at Asn64. Residues 138-142 carry the HXXHC 1 motif; sequence HQLHC. Asn159 carries N-linked (GlcNAc...) asparagine glycosylation. Positions 173–177 match the HXXHC 2 motif; it reads HIDHC.

It belongs to the ustYa family.

Its subcellular location is the membrane. Its pathway is mycotoxin biosynthesis. Functionally, ustYa family oxidase; part of the gene cluster that mediates the biosynthesis of the phomopsins, a group of hexapeptide mycotoxins which infects lupins and causes lupinosis disease in livestock. Within the pathway, phomYc' catalyzes the desaturation of the Ile moiety into 2,3-dehydroisoleucine (dIle). The pathway starts with the processing of the precursor phomA' by several endopeptidases including kexin proteases as well as the cluster-specific S41 family peptidase phomP1 and the oligopeptidase phomG' to produce 10 identical copies of the hexapeptide Tyr-Val-Ile-Pro-Ile-Asp. After being excised from the precursor peptide, the core peptides are cyclized and modified post-translationally by enzymes encoded within the gene cluster. The timing and order of proteolysis of the phomA' precursor and PTMs are still unknown. Two tyrosinase-like enzymes, phomQ1' and phomQ2, catalyze the chlorination and hydroxylation of Tyr, respectively. PhomYb, is proposed to be involved in the construction of the macrocyclic structure. The other 4 ustYa family proteins may be involved in PTMs that generate the unique structure of phomopsin A. PhomYa' is required for the hydroxylation of C-beta of Tyr. PhomYc', phomYd', and phomYe are responsible for the biosynthesis of 2,3-dehydroisoleucine (dIle), 2,3-dehydroaspartic acid (dAsp), and 3,4-dehydroproline (dPro), respectively. While dIle formation by phomYc' is indispensable for the installation of dAsp by phomYd', the order of the other PTMs have not been elucidated yet. Most of the biosynthetic enzymes likely have broad substrate specificity, and thus, there might be a metabolic grid from a precursor to phomopsin A. The enzyme(s) responsible for the biosynthesis of 3,4-dehydrovaline (dVal) have also not been identified yet. Finally, phomM' acts as an S-adenosylmethionine-dependent alpha-N-methyltransferase that catalyzes two successive N-methylation reactions, converting N-desmethyl-phomopsin A to phomopsin A and phomopsin A further to an N,N-dimethylated congener called phomopsin E. The sequence is that of UstYa family oxidase phomYc' from Diaporthe leptostromiformis (Lupinosis disease fungus).